The chain runs to 391 residues: Small ribosomal subunit protein bS1 (391 aa).

S1 motif domains lie at 16 to 90 (GDKV…LSRR), 108 to 173 (NEII…LSRK), 194 to 262 (GDVI…LSIK), and 279 to 348 (NDVI…LSIK).

Belongs to the bacterial ribosomal protein bS1 family.

Functionally, binds mRNA; thus facilitating recognition of the initiation point. It is needed to translate mRNA with a short Shine-Dalgarno (SD) purine-rich sequence. The polypeptide is Small ribosomal subunit protein bS1 (rpsA) (Staphylococcus aureus (strain MSSA476)).